We begin with the raw amino-acid sequence, 590 residues long: Pescadillo homolog (590 aa).

The disordered stretch occupies residues 297-318 (AKADAGEEEEVEEEEEVEDDGL). Residues 302–318 (GEEEEVEEEEEVEDDGL) are compositionally biased toward acidic residues. In terms of domain architecture, BRCT spans 337 to 446 (TAGQLFSNFT…KLLPVSEYAP (110 aa)). The tract at residues 452–590 (AHLSPWGDAG…RKLNEKKEKR (139 aa)) is disordered. Acidic residues predominate over residues 471-499 (DASDDDEDDEDIEVAPEDYDKDDEEEEAE). Residues 489 to 589 (YDKDDEEEEA…RRKLNEKKEK (101 aa)) adopt a coiled-coil conformation. Basic and acidic residues-rich tracts occupy residues 500 to 517 (AEAK…KGTK), 532 to 547 (DKMT…DKKL), and 567 to 577 (NDKKSDREAEL).

The protein belongs to the pescadillo family. As to quaternary structure, component of the NOP7 complex, composed of ERB1, NOP7 and YTM1. The complex is held together by ERB1, which interacts with NOP7 via its N-terminal domain and with YTM1 via a high-affinity interaction between the seven-bladed beta-propeller domains of the 2 proteins. The NOP7 complex associates with the 66S pre-ribosome.

It is found in the nucleus. The protein localises to the nucleolus. It localises to the nucleoplasm. In terms of biological role, component of the NOP7 complex, which is required for maturation of the 25S and 5.8S ribosomal RNAs and formation of the 60S ribosome. The chain is Pescadillo homolog from Yarrowia lipolytica (strain CLIB 122 / E 150) (Yeast).